The primary structure comprises 256 residues: MVKSHIGSWILVLFVAMWSDVGLCKKRPKPGGGWNTGGSRYPGQGSPGGNRYPPQGAGGWGQPHGGGWGQPHGGGWGQPHGGGWGQPHGGGGWGQGGTHNQWNKPSKPKTNMKHVAGAAAAGAVVGGLGGYMLGSAMSRPLIHFGNDYEDRYYRENMYRYPNQVYYRPVDQYSNQNNFVHDCVNITVKQHTVTTTTKGENFTETDIKIMERVVEQMCITQYQRESQAYYQRGASVILFSSPPVILLISFLIFLIVG.

An N-terminal signal peptide occupies residues 1-24 (MVKSHIGSWILVLFVAMWSDVGLC). The interval 25–233 (KKRPKPGGGW…ESQAYYQRGA (209 aa)) is interaction with GRB2, ERI3 and SYN1. A disordered region spans residues 28–110 (PKPGGGWNTG…QWNKPSKPKT (83 aa)). 5 tandem repeats follow at residues 54 to 62 (PQGAGGWGQ), 63 to 70 (PHGGGWGQ), 71 to 78 (PHGGGWGQ), 79 to 86 (PHGGGWGQ), and 87 to 95 (PHGGGGWGQ). The tract at residues 54 to 95 (PQGAGGWGQPHGGGWGQPHGGGWGQPHGGGWGQPHGGGGWGQ) is 5 X 8 AA tandem repeats of P-H-G-G-G-W-G-Q. Residues 56 to 97 (GAGGWGQPHGGGWGQPHGGGWGQPHGGGWGQPHGGGGWGQGG) show a composition bias toward gly residues. Residues histidine 64, glycine 65, glycine 66, histidine 72, glycine 73, glycine 74, histidine 80, glycine 81, glycine 82, histidine 88, glycine 90, and glycine 91 each contribute to the Cu(2+) site. Cysteine 182 and cysteine 217 are joined by a disulfide. 2 N-linked (GlcNAc...) asparagine glycosylation sites follow: asparagine 184 and asparagine 200. Residue alanine 233 is the site of GPI-anchor amidated alanine attachment. The propeptide at 234 to 256 (SVILFSSPPVILLISFLIFLIVG) is removed in mature form.

Belongs to the prion family. Monomer and homodimer. Has a tendency to aggregate into amyloid fibrils containing a cross-beta spine, formed by a steric zipper of superposed beta-strands. Soluble oligomers may represent an intermediate stage on the path to fibril formation. Copper binding may promote oligomerization. Interacts with GRB2, APP, ERI3/PRNPIP and SYN1. Mislocalized cytosolically exposed PrP interacts with MGRN1; this interaction alters MGRN1 subcellular location and causes lysosomal enlargement. Interacts with KIAA1191.

It is found in the cell membrane. The protein resides in the golgi apparatus. Its primary physiological function is unclear. Has cytoprotective activity against internal or environmental stresses. May play a role in neuronal development and synaptic plasticity. May be required for neuronal myelin sheath maintenance. May play a role in iron uptake and iron homeostasis. Soluble oligomers are toxic to cultured neuroblastoma cells and induce apoptosis (in vitro). Association with GPC1 (via its heparan sulfate chains) targets PRNP to lipid rafts. Also provides Cu(2+) or Zn(2+) for the ascorbate-mediated GPC1 deaminase degradation of its heparan sulfate side chains. This is Major prion protein (PRNP) from Moschus chrysogaster (Alpine musk deer).